A 116-amino-acid chain; its full sequence is MAGFGLPNFGQLTEAFKKAKQIQQDAQKLQDELENMEIEGKSDDEMIKVWISGNQLPLKVEVQENILNADKEKIEKNILQAIQKAHESSTTTMKERMNDLTGGLNLNLPGFDNSDS.

This sequence belongs to the YbaB/EbfC family. In terms of assembly, homodimer.

The protein resides in the cytoplasm. It is found in the nucleoid. Binds to DNA and alters its conformation. May be involved in regulation of gene expression, nucleoid organization and DNA protection. This Prochlorococcus marinus (strain MIT 9215) protein is Nucleoid-associated protein P9215_00191.